We begin with the raw amino-acid sequence, 63 residues long: Small ribosomal subunit protein bS21 (63 aa).

The protein belongs to the bacterial ribosomal protein bS21 family.

The chain is Small ribosomal subunit protein bS21 from Phocaeicola vulgatus (strain ATCC 8482 / DSM 1447 / JCM 5826 / CCUG 4940 / NBRC 14291 / NCTC 11154) (Bacteroides vulgatus).